The following is a 111-amino-acid chain: MFVLVMICLFCQYWGVLNELEEEDRGLLCYKCKKYHLGLCYGIMTSCVPNHRQTCAAENFYILTKKGQSMYHYSRLSCMTNCEDINFLSFERRTELICCKHSNYCNLPMGL.

An N-terminal signal peptide occupies residues 1–18 (MFVLVMICLFCQYWGVLN). A UPAR/Ly6 domain is found at 27 to 108 (LLCYKCKKYH…CKHSNYCNLP (82 aa)). 4 cysteine pairs are disulfide-bonded: Cys-29–Cys-55, Cys-32–Cys-40, Cys-47–Cys-78, and Cys-82–Cys-99.

Belongs to the PATE family. Expressed in prostate, testis, brain and lung.

The protein localises to the secreted. The chain is Prostate and testis expressed protein 2 (Pate2) from Mus musculus (Mouse).